Consider the following 782-residue polypeptide: Cysteine-rich protein 2-binding protein (782 aa).

Phosphoserine is present on Ser4. Residues 13–33 (RHDDEATRTSTSEGLEEGEVE) are disordered. An N6-acetyllysine modification is found at Lys231. Residues 251–282 (PVESAMELKEKRSRTQEAKDIRRAQKEAAGFL) form a disordered region. A compositionally biased stretch (basic and acidic residues) spans 256-276 (MELKEKRSRTQEAKDIRRAQK). Phosphoserine is present on Ser285. Lys292 bears the N6-acetyllysine mark. Over residues 315-335 (LSSSDRTPLTSPSPSPSLDFS) the composition is skewed to low complexity. Disordered stretches follow at residues 315 to 346 (LSSS…HSAT) and 400 to 460 (VRKK…EPRY). Composition is skewed to basic and acidic residues over residues 405 to 426 (RGPE…RMDI) and 446 to 459 (KPQL…KEPR). Position 416 is a phosphoserine (Ser416). An N-acetyltransferase domain is found at 638–782 (LDYCYVRPNH…KHAFFLRLRR (145 aa)).

In terms of assembly, interacts with the LIM 1 domain of CSRP2. Component of the ADA2A-containing complex (ATAC), composed of CSRP2BP, KAT2A, TADA2L, TADA3L, ZZ3, MBIP, WDR5, YEATS2, CCDC101 and DR1. In the complex, it probably interacts directly with KAT2A, MBIP and WDR5. Expressed in skeletal muscle, heart, lung, placenta, brain, liver, pancreas and kidney. High expression in skeletal muscle and heart. Lower expression in lung.

Its subcellular location is the nucleus. The protein resides in the cytoplasm. Component of the ATAC complex, a complex with histone acetyltransferase activity on histones H3 and H4. May function as a scaffold for the ATAC complex to promote ATAC complex stability. Has also weak histone acetyltransferase activity toward histone H4. Required for the normal progression through G1 and G2/M phases of the cell cycle. In Homo sapiens (Human), this protein is Cysteine-rich protein 2-binding protein.